The following is a 369-amino-acid chain: MSYNSFGHLFRVTTWGESHGPAIGCVVDGVPPRIPLSEADIQPFLDRRRPGQSRFTTQRREPDIVRILSGVHGGVTTGTPVALQIENTDQRSQDYANIADRFRPGHADIAYHWKYGVRDPRGGGRSSARETATRVAAGAIARKILGERVRIRGALVQMGRHAIDRARFDWDEVDRNAFFCPDPEAAKAWAEELDAVRKAGSSLGAVVEVVAEGISPGLGAPVYAKLDADLAAAMMSINAVKGVEIGDGFAAAALRGEENADEMRMNEDGTVRFLANHAGGVLGGISTGQPVIVRFAVKPTSSILTPVHSVDSDGDEVDIQTKGRHDPCVGIRAVPVGEAMMACVLADQLLLHRAQCGETGAGRLPLAKK.

NADP(+) is bound by residues R48 and R54. FMN-binding positions include 125-127, 238-239, G283, 298-302, and R324; these read RSS, NA, and KPTSS.

It belongs to the chorismate synthase family. Homotetramer. FMNH2 serves as cofactor.

The enzyme catalyses 5-O-(1-carboxyvinyl)-3-phosphoshikimate = chorismate + phosphate. Its pathway is metabolic intermediate biosynthesis; chorismate biosynthesis; chorismate from D-erythrose 4-phosphate and phosphoenolpyruvate: step 7/7. Catalyzes the anti-1,4-elimination of the C-3 phosphate and the C-6 proR hydrogen from 5-enolpyruvylshikimate-3-phosphate (EPSP) to yield chorismate, which is the branch point compound that serves as the starting substrate for the three terminal pathways of aromatic amino acid biosynthesis. This reaction introduces a second double bond into the aromatic ring system. The protein is Chorismate synthase of Acidiphilium cryptum (strain JF-5).